The chain runs to 506 residues: Acetaldehyde dehydrogenase (506 aa).

Catalysis depends on residues glutamate 262 and cysteine 301.

It belongs to the aldehyde dehydrogenase family.

The catalysed reaction is acetaldehyde + NAD(+) + H2O = acetate + NADH + 2 H(+). It participates in alcohol metabolism; ethanol degradation; acetate from ethanol: step 2/2. Functionally, catalyzes the NAD(+)-dependent oxidation of acetaldehyde to acetate. Is likely a component of the ethanol oxidation system that allows P.aeruginosa to grow on ethanol as the sole carbon and energy source. The chain is Acetaldehyde dehydrogenase from Pseudomonas aeruginosa.